Reading from the N-terminus, the 621-residue chain is MDSHTLIQALIYLGAAALIVPIAVRLGLGSVLGYLIAGCIIGPWALRLVTDAEAILHFAEIGVVLMLFVIGLELDPQRLWKLRASVFGGGALQMVACGVLIGLFCMLLGLRWQVAELIGMTLALSSTAIAMQAMNERNLTVSQMGRSAFAVLLFQDIAAIPLVAMIPLLAASGGATSLMAFALSALKVAAALALVVVLGRYLTRPLLRFVARSGLREVFSAVALFLVFGFGLLLEEVGLSMAMGAFLAGVLLASSEYRHALESDIEPFKGLLLGLFFIGVGMSIDFGTLVTHPLRIVILLVGFLAIKMLMLWLIARPLGVPRAQRRWFAVLLGQGSEFAFVVFGAARMADVLDGEWAKALTLAVALSMAATPILLVLLTRLEKSSSGQARDADEIDEEQPRVIVAGFGRFGQIAGRLLLSSGVKMVILDHDPDHVDTLRKFDMKVFYGDATRVDLLESAGAEKAEVLINAIDDPHVSLELVARVKEHFPHLQIISRARDVDHYIQLRQAGVEAPERETFEAALKSGRMTLEALGLGAYEARERADLFRRFNLQMVEEMVAMAENDAASRVAVFKRTSDMLTGIINEDRHHLSLVQRHGWQGTEEGRHTGDIADEPENKPSA.

13 helical membrane passes run 4–24 (HTLI…PIAV), 26–46 (LGLG…PWAL), 54–74 (AILH…GLEL), 90–110 (GALQ…LLGL), 114–134 (VAEL…MQAM), 149–169 (FAVL…IPLL), 178–198 (LMAF…VVVL), 218–237 (VFSA…LEEV), 238–257 (GLSM…SSEY), 270–290 (GLLL…GTLV), 294–314 (LRIV…LWLI), 326–346 (RWFA…FGAA), and 359–379 (ALTL…VLLT). The 120-residue stretch at 399 to 518 (QPRVIVAGFG…AGVEAPERET (120 aa)) folds into the RCK N-terminal domain. The segment at 598–621 (GWQGTEEGRHTGDIADEPENKPSA) is disordered.

It belongs to the monovalent cation:proton antiporter 2 (CPA2) transporter (TC 2.A.37) family. KefC subfamily. In terms of assembly, homodimer. Interacts with the regulatory subunit KefF.

It localises to the cell inner membrane. Its function is as follows. Pore-forming subunit of a potassium efflux system that confers protection against electrophiles. Catalyzes K(+)/H(+) antiport. This Klebsiella pneumoniae subsp. pneumoniae (strain ATCC 700721 / MGH 78578) protein is Glutathione-regulated potassium-efflux system protein KefC.